The sequence spans 1039 residues: MFSTKSAWLRNGGADQGPRGIALREAVMLLLYFGVPTGPSYNLDPENALLYQGPSGTLFGYSVVLHSHGSKRWLIVGAPTASWLSNASVVNPGAIYRCGIRKNPNQTCEQLQSGSPSGEPCGKTCLEERDNQWLGVTLSRQPGENGSIVTCGHRWKNIFYMKSDNKLPTGICYVMPSDLRTELSKRMAPCYKDYTRKFGENFASCQAGISSFYTQDLIVMGAPGSSYWTGTVFVYNITTNQYKAFVDRQNQVKFGSYLGYSVGAGHFRSPHTTEVVGGAPQHEQIGKAYIFSIDENELNIVYEMKGKKLGSYFGASVCAVDLNADGFSDLLVGAPMQSTIREEGRVFVYINSGMGAVMVEMERVLVGSDKYAARFGESIANLGDIDNDGFEDIAIGAPQEDDLRGAVYIYNGRVDGISSTYSQRIEGQQISKSLRMFGQSISGQIDADNNGYVDVAVGAFQSDSAVLLRTRPVVIVEASLSHPESVNRTKFDCTENGLPSVCMHLTLCFSYKGKEVPGYIVLFYNVSLDVHRKAESPSRFYFFSNGTSDVITGSIRVSSSGEKCRTHQAFMRKDVRDILTPIHVEATYHLGHHVITKRNTEEFPPLQPILQQKKEKDVIRKMINFARFCAYENCSADLQVSAKVGFLKPYENKTYLAVGSMKTIMLNVSLFNAGDDAYETTLNVQLPTGLYFIKILDLEEKQINCEVTESSGIVKLACSLGYIYVDRLSRIDISFLLDVSSLSRAHEDLSISVHASCENEGELDQVRDNRVTLTIPLRYEVMLTVHGLVNPTSFVYGSSEENEPETCMAEKLNLTFHVINTGISMAPNVSVKIMVPNSFLPQDDKLFNVLDVQTTTGQCHFKHYGRECTFAQQKGIAGTLTDIVKFLSKTDKRLLYCMKADQHCLDFLCNFGKMESGKEASVHIQLEGRPSILEMDETSSLKFEIKATAFPEPHPKVIELNKDENVAHVFLEGLHHQRPKRHFTIIIITISLLLGLIVLLLISCVMWKAGFFKRQYKSILQEENRRDSWSYVNSKSNDD.

An N-terminal signal peptide occupies residues Met-1–Ser-40. The Extracellular portion of the chain corresponds to Tyr-41 to Phe-983. FG-GAP repeat units follow at residues Asn-42–Thr-107, Ser-117–Ser-184, Asp-193–Ala-244, Val-246–Leu-298, Asn-299–Met-358, Glu-362–Ser-419, and Gln-423–Ser-485. 3 N-linked (GlcNAc...) asparagine glycosylation sites follow: Asn-86, Asn-105, and Asn-145. A disulfide bridge links Cys-98 with Cys-108. Disulfide bonds link Cys-151/Cys-172 and Cys-190/Cys-205. Asn-236 is a glycosylation site (N-linked (GlcNAc...) asparagine). The Ca(2+) site is built by Asp-321, Asn-323, Asp-325, Asp-329, Asp-384, Asp-386, Asp-388, Asp-392, Asp-446, Asp-448, Asn-450, Tyr-452, and Asp-454. A glycan (N-linked (GlcNAc...) asparagine) is linked at Asn-487. Cystine bridges form between Cys-493–Cys-502 and Cys-508–Cys-564. N-linked (GlcNAc...) asparagine glycosylation is found at Asn-525 and Asn-545. The SG1 signature appears at Lys-613–Ile-623. A disulfide bond links Cys-629 and Cys-634. Residues Asn-633, Asn-652, and Asn-667 are each glycosylated (N-linked (GlcNAc...) asparagine). The cysteines at positions 705 and 718 are disulfide-linked. Asn-813 and Asn-828 each carry an N-linked (GlcNAc...) asparagine glycan. Intrachain disulfides connect Cys-859–Cys-897 and Cys-904–Cys-909. Residues Thr-984–Trp-1007 form a helical membrane-spanning segment. Residues Lys-1008–Asp-1039 lie on the Cytoplasmic side of the membrane. Positions Gly-1010–Arg-1014 match the GFFKR motif motif. Phosphoserine is present on Ser-1028.

The protein belongs to the integrin alpha chain family. As to quaternary structure, heterodimer of an alpha and a beta subunit. The alpha subunit can sometimes be cleaved into two non-covalently associated fragments. Alpha-4 associates with either beta-1 or beta-7. Alpha-4 interacts with PXN, LPXN, and TGFB1I1/HIC5. Interacts with CSPG4 through CSPG4 chondroitin sulfate glycosaminoglycan. Interacts with JAML; integrin alpha-4/beta-1 may regulate leukocyte to endothelial cells adhesion by controlling JAML homodimerization. ITGA4:ITGB1 is found in a ternary complex with CX3CR1 and CX3CL1. Interacts with MDK. ITGA4:ITGB1 interacts with MDK; this interaction mediates MDK-induced osteoblast cells migration through PXN phosphorylation. Integrin ITGA4:ITGB1 interacts with SVEP1 (via Sushi domain 21); thereby inhibits Ca(2+) intracellular signaling and as a result represses vasocontraction. ITGA4:ITGB1 interacts with SELP. ITGA4:ITGB1 interacts with BCAM. Phosphorylation on Ser-1028 inhibits PXN binding. In terms of tissue distribution, expressed in the media layer of the arterial wall (at protein level). Weakly expression in the thymus, spleen and mesenteric lymph nodes.

It is found in the membrane. Integrins alpha-4/beta-1 (VLA-4 or LPAM-2) and alpha-4/beta-7 (LPAM-1) are receptors for fibronectin. They recognize one or more domains within the alternatively spliced CS-1 and CS-5 regions of fibronectin. They are also receptors for VCAM1. Integrin alpha-4/beta-1 recognizes the sequence Q-I-D-S in VCAM1. Integrin alpha-4/beta-7 is also a receptor for MADCAM1. It recognizes the sequence L-D-T in MADCAM1. On activated endothelial cells integrin VLA-4 triggers homotypic aggregation for most VLA-4-positive leukocyte cell lines. It may also participate in cytolytic T-cell interactions with target cells. ITGA4:ITGB1 binds to fractalkine (CX3CL1) and may act as its coreceptor in CX3CR1-dependent fractalkine signaling. ITGA4:ITGB1 binds to PLA2G2A via a site (site 2) which is distinct from the classical ligand-binding site (site 1) and this induces integrin conformational changes and enhanced ligand binding to site 1. Integrin ITGA4:ITGB1 represses PRKCA-mediated L-type voltage-gated channel Ca(2+) influx and ROCK-mediated calcium sensitivity in vascular smooth muscle cells via its interaction with SVEP1, thereby inhibiting vasocontraction. This is Integrin alpha-4 (Itga4) from Mus musculus (Mouse).